A 529-amino-acid chain; its full sequence is Polygalacturonase (529 aa).

An N-terminal signal peptide occupies residues 1 to 21 (MNHRYTLLALAAAALSAGAHA). The active-site Proton donor is the Asp-305. Residue His-331 is part of the active site. Residues 516-529 (AFVPLKSVAPTSPI) form a required for PGA export across the outer membrane and catalytic activity region.

Belongs to the glycosyl hydrolase 28 family. In terms of assembly, monomer.

The protein resides in the secreted. The enzyme catalyses (1,4-alpha-D-galacturonosyl)n+m + H2O = (1,4-alpha-D-galacturonosyl)n + (1,4-alpha-D-galacturonosyl)m.. Functionally, contributes to the wilt disease production on tomato. This is Polygalacturonase (pglA) from Ralstonia solanacearum (Pseudomonas solanacearum).